The sequence spans 70 residues: MKQGIHPEYKEITATCSCGNVIKTRSTVEKNLNLDVCGNCHPFYTGKQRVVDTGGRVERFNKRFNIPSTK.

4 residues coordinate Zn(2+): C16, C18, C37, and C40.

This sequence belongs to the bacterial ribosomal protein bL31 family. Type A subfamily. As to quaternary structure, part of the 50S ribosomal subunit. Zn(2+) is required as a cofactor.

Binds the 23S rRNA. This chain is Large ribosomal subunit protein bL31, found in Haemophilus ducreyi (strain 35000HP / ATCC 700724).